The chain runs to 96 residues: MDYTKILIKPLISEKTTYIKELSRQVAFFVDPRANKIEIKKAVEAAFKVKVADVNVVNRKSSDRVRQGRVVGRVAGFKKAYVTLAPGEKIEFFEGV.

Belongs to the universal ribosomal protein uL23 family. In terms of assembly, part of the 50S ribosomal subunit. Contacts protein L29, and trigger factor when it is bound to the ribosome.

In terms of biological role, one of the early assembly proteins it binds 23S rRNA. One of the proteins that surrounds the polypeptide exit tunnel on the outside of the ribosome. Forms the main docking site for trigger factor binding to the ribosome. The sequence is that of Large ribosomal subunit protein uL23 from Nitratidesulfovibrio vulgaris (strain ATCC 29579 / DSM 644 / CCUG 34227 / NCIMB 8303 / VKM B-1760 / Hildenborough) (Desulfovibrio vulgaris).